Reading from the N-terminus, the 337-residue chain is tRNA N6-adenosine threonylcarbamoyltransferase (337 aa).

His-111 and His-115 together coordinate Fe cation. Residues 134–138 (LVSGG), Asp-167, Gly-180, and Asn-272 each bind substrate. Asp-300 is a binding site for Fe cation.

Belongs to the KAE1 / TsaD family. Requires Fe(2+) as cofactor.

It localises to the cytoplasm. It catalyses the reaction L-threonylcarbamoyladenylate + adenosine(37) in tRNA = N(6)-L-threonylcarbamoyladenosine(37) in tRNA + AMP + H(+). Its function is as follows. Required for the formation of a threonylcarbamoyl group on adenosine at position 37 (t(6)A37) in tRNAs that read codons beginning with adenine. Is involved in the transfer of the threonylcarbamoyl moiety of threonylcarbamoyl-AMP (TC-AMP) to the N6 group of A37, together with TsaE and TsaB. TsaD likely plays a direct catalytic role in this reaction. The sequence is that of tRNA N6-adenosine threonylcarbamoyltransferase from Aeromonas salmonicida (strain A449).